A 596-amino-acid chain; its full sequence is Aspartate--tRNA(Asp/Asn) ligase (596 aa).

Residue Glu172 participates in L-aspartate binding. Residues 196–199 are aspartate; sequence QLFK. L-aspartate is bound at residue Arg218. ATP contacts are provided by residues 218–220 and Gln227; that span reads RDE. Residue His455 participates in L-aspartate binding. Glu489 lines the ATP pocket. Arg496 is a binding site for L-aspartate. 541 to 544 is an ATP binding site; sequence GLDR.

The protein belongs to the class-II aminoacyl-tRNA synthetase family. Type 1 subfamily. As to quaternary structure, homodimer.

Its subcellular location is the cytoplasm. The catalysed reaction is tRNA(Asx) + L-aspartate + ATP = L-aspartyl-tRNA(Asx) + AMP + diphosphate. Its function is as follows. Aspartyl-tRNA synthetase with relaxed tRNA specificity since it is able to aspartylate not only its cognate tRNA(Asp) but also tRNA(Asn). Reaction proceeds in two steps: L-aspartate is first activated by ATP to form Asp-AMP and then transferred to the acceptor end of tRNA(Asp/Asn). The polypeptide is Aspartate--tRNA(Asp/Asn) ligase (Bordetella avium (strain 197N)).